Here is a 687-residue protein sequence, read N- to C-terminus: Phage-like element PBSX protein XkdV (687 aa).

This sequence to B.subtilis YqcC.

The protein is Phage-like element PBSX protein XkdV (xkdV) of Bacillus subtilis (strain 168).